A 613-amino-acid polypeptide reads, in one-letter code: tRNA 5-methylaminomethyl-2-thiouridine biosynthesis bifunctional protein MnmC (613 aa).

Positions 1-225 (MKKAKLIFKD…KREMIKAYLE (225 aa)) are tRNA (mnm(5)s(2)U34)-methyltransferase. Residues 252–613 (IGAGISSAVL…FLIRKLKKGL (362 aa)) form an FAD-dependent cmnm(5)s(2)U34 oxidoreductase region.

This sequence in the N-terminal section; belongs to the methyltransferase superfamily. tRNA (mnm(5)s(2)U34)-methyltransferase family. In the C-terminal section; belongs to the DAO family. FAD is required as a cofactor.

It localises to the cytoplasm. It catalyses the reaction 5-aminomethyl-2-thiouridine(34) in tRNA + S-adenosyl-L-methionine = 5-methylaminomethyl-2-thiouridine(34) in tRNA + S-adenosyl-L-homocysteine + H(+). Its function is as follows. Catalyzes the last two steps in the biosynthesis of 5-methylaminomethyl-2-thiouridine (mnm(5)s(2)U) at the wobble position (U34) in tRNA. Catalyzes the FAD-dependent demodification of cmnm(5)s(2)U34 to nm(5)s(2)U34, followed by the transfer of a methyl group from S-adenosyl-L-methionine to nm(5)s(2)U34, to form mnm(5)s(2)U34. The sequence is that of tRNA 5-methylaminomethyl-2-thiouridine biosynthesis bifunctional protein MnmC from Campylobacter jejuni subsp. jejuni serotype O:2 (strain ATCC 700819 / NCTC 11168).